The chain runs to 170 residues: Lipoprotein signal peptidase (170 aa).

Helical transmembrane passes span 9 to 29, 72 to 92, and 96 to 118; these read FNIF…KYLV, IFFL…SLKE, and IARI…RLFR. Active-site residues include Asp-124 and Asp-146. A helical membrane pass occupies residues 143-163; sequence NFADSYVVIGMILFLVYDFFI.

It belongs to the peptidase A8 family.

It is found in the cell inner membrane. It carries out the reaction Release of signal peptides from bacterial membrane prolipoproteins. Hydrolyzes -Xaa-Yaa-Zaa-|-(S,diacylglyceryl)Cys-, in which Xaa is hydrophobic (preferably Leu), and Yaa (Ala or Ser) and Zaa (Gly or Ala) have small, neutral side chains.. Its pathway is protein modification; lipoprotein biosynthesis (signal peptide cleavage). In terms of biological role, this protein specifically catalyzes the removal of signal peptides from prolipoproteins. This Borreliella afzelii (strain PKo) (Borrelia afzelii) protein is Lipoprotein signal peptidase.